The sequence spans 769 residues: Serine protease HtrA-like (769 aa).

The segment covering methionine 1–glutamate 20 has biased composition (basic residues). Residues methionine 1 to glycine 388 are disordered. 3 stretches are compositionally biased toward basic and acidic residues: residues phenylalanine 21–lysine 64, leucine 71–lysine 87, and tyrosine 96–lysine 108. The span at tyrosine 126–threonine 139 shows a compositional bias: polar residues. Residues aspartate 140 to serine 186 show a composition bias toward basic and acidic residues. The span at glutamine 247 to serine 262 shows a compositional bias: polar residues. Basic and acidic residues-rich tracts occupy residues glutamine 264–aspartate 296 and lysine 310–asparagine 330. A compositionally biased stretch (polar residues) spans alanine 331–histidine 347. Residues arginine 348–asparagine 364 are compositionally biased toward basic and acidic residues. Over residues glutamine 366–glycine 388 the composition is skewed to polar residues. Residues leucine 410–valine 430 traverse the membrane as a helical segment. Active-site charge relay system residues include histidine 504, aspartate 534, and serine 619. Residues isoleucine 680–aspartate 733 form the PDZ domain.

This sequence belongs to the peptidase S1C family.

The protein localises to the cell membrane. The protein is Serine protease HtrA-like of Staphylococcus aureus (strain MRSA252).